We begin with the raw amino-acid sequence, 200 residues long: MAKVLVLYYSSYGHVETMAQHIVEGAKSVPGVEVTLKRVPETIPVDQARAIGVKVDQAAPVATVDELADYDAIIFGTPTRFGNMAGQMRTFLDQTGGLWMKGALVGKIGSVFASTGTQHGGQETTITSFHTTLLHHGMVIVGVPYACSGLVNMNEITGGTPYGATTLAGADGSRQPSANELDIARYQGKHVAELANKLAS.

The Flavodoxin-like domain occupies 4-191 (VLVLYYSSYG…DIARYQGKHV (188 aa)). Residues 10 to 15 (SSYGHV) and 79 to 81 (TRF) contribute to the FMN site. NAD(+) is bound at residue Tyr12. Trp99 serves as a coordination point for substrate. FMN is bound by residues 114–120 (STGTQHG) and His135.

This sequence belongs to the WrbA family. It depends on FMN as a cofactor.

It carries out the reaction a quinone + NADH + H(+) = a quinol + NAD(+). The catalysed reaction is a quinone + NADPH + H(+) = a quinol + NADP(+). This chain is NAD(P)H dehydrogenase (quinone), found in Burkholderia cenocepacia (strain ATCC BAA-245 / DSM 16553 / LMG 16656 / NCTC 13227 / J2315 / CF5610) (Burkholderia cepacia (strain J2315)).